A 67-amino-acid chain; its full sequence is DNA-directed RNA polymerase subunit omega (67 aa).

This sequence belongs to the RNA polymerase subunit omega family. As to quaternary structure, the RNAP catalytic core consists of 2 alpha, 1 beta, 1 beta' and 1 omega subunit. When a sigma factor is associated with the core the holoenzyme is formed, which can initiate transcription.

It carries out the reaction RNA(n) + a ribonucleoside 5'-triphosphate = RNA(n+1) + diphosphate. In terms of biological role, promotes RNA polymerase assembly. Latches the N- and C-terminal regions of the beta' subunit thereby facilitating its interaction with the beta and alpha subunits. In Variovorax paradoxus (strain S110), this protein is DNA-directed RNA polymerase subunit omega.